An 88-amino-acid polypeptide reads, in one-letter code: Small ribosomal subunit protein bS20 (88 aa).

The tract at residues 1–25 is disordered; the sequence is MANTPSAKKAARKIERRTAVNRARR.

It belongs to the bacterial ribosomal protein bS20 family.

Its function is as follows. Binds directly to 16S ribosomal RNA. The protein is Small ribosomal subunit protein bS20 of Azorhizobium caulinodans (strain ATCC 43989 / DSM 5975 / JCM 20966 / LMG 6465 / NBRC 14845 / NCIMB 13405 / ORS 571).